The following is a 199-amino-acid chain: Pyridoxal 5'-phosphate synthase subunit PdxT (199 aa).

52-54 (GES) serves as a coordination point for L-glutamine. The active-site Nucleophile is the cysteine 84. Residues arginine 115 and 143-144 (IR) contribute to the L-glutamine site. Active-site charge relay system residues include histidine 179 and glutamate 181.

The protein belongs to the glutaminase PdxT/SNO family. In terms of assembly, in the presence of PdxS, forms a dodecamer of heterodimers. Only shows activity in the heterodimer.

The enzyme catalyses aldehydo-D-ribose 5-phosphate + D-glyceraldehyde 3-phosphate + L-glutamine = pyridoxal 5'-phosphate + L-glutamate + phosphate + 3 H2O + H(+). The catalysed reaction is L-glutamine + H2O = L-glutamate + NH4(+). Its pathway is cofactor biosynthesis; pyridoxal 5'-phosphate biosynthesis. Catalyzes the hydrolysis of glutamine to glutamate and ammonia as part of the biosynthesis of pyridoxal 5'-phosphate. The resulting ammonia molecule is channeled to the active site of PdxS. The chain is Pyridoxal 5'-phosphate synthase subunit PdxT from Methanosarcina mazei (strain ATCC BAA-159 / DSM 3647 / Goe1 / Go1 / JCM 11833 / OCM 88) (Methanosarcina frisia).